The following is a 314-amino-acid chain: MPERVVIALGGNALQQRGQKGTYDEMMENVRKTAKQIAEIIARGYEVVITHGNGPQVGTILLHMDAGQSLHGIPAQPMDVAGAMSQGWIGYMIQQALRNELRKRGIEKEVVTIITQTIVDKKDPAFQNPTKPVGPFYDEKTAKKLAKEKGWVVKEDAGRGWRRVVPSPDPKGHVEAETIRRLVESGIIVIASGGGGVPVIEENGEIKGVEAVIDKDLAGEKLAEEVNADILMILTDVNGAALYYGTEKETWLRNVKVEELEKYYQEGHFKAGSMGPKVLAAIRFIKNGGKRAIIAHLEKAVEALEGKTGTQVTP.

It belongs to the carbamate kinase family. As to quaternary structure, homodimer.

The protein localises to the cytoplasm. It carries out the reaction hydrogencarbonate + NH4(+) + ATP = carbamoyl phosphate + ADP + H2O + H(+). The polypeptide is Carbamate kinase (cpkA) (Pyrococcus horikoshii (strain ATCC 700860 / DSM 12428 / JCM 9974 / NBRC 100139 / OT-3)).